The primary structure comprises 524 residues: Cytochrome P450 52A6 (524 aa).

A helical transmembrane segment spans residues Trp17–Ile34. Cys472 serves as a coordination point for heme.

It belongs to the cytochrome P450 family. The cofactor is heme.

The protein resides in the membrane. Functionally, together with an NADPH cytochrome P450 the enzyme system catalyzes the terminal hydroxylation as the first step in the assimilation of alkanes and fatty acids. Preferentially hydroxylates hexadecane. The protein is Cytochrome P450 52A6 (CYP52A6) of Candida tropicalis (Yeast).